We begin with the raw amino-acid sequence, 335 residues long: Proline racemase (335 aa).

The active-site Proton acceptor is the C91. Residue C256 is the Proton donor of the active site.

Belongs to the proline racemase family.

The catalysed reaction is L-proline = D-proline. Inhibited by pyrrole-2-carboxylate in vitro. Functionally, catalyzes the reversible interconversion of L- and D-proline. Likely functions as the proline racemase necessary for D-proline generation in order to discriminate it from the L-proline used for protein synthesis. In Acetoanaerobium sticklandii (strain ATCC 12662 / DSM 519 / JCM 1433 / CCUG 9281 / NCIMB 10654 / HF) (Clostridium sticklandii), this protein is Proline racemase.